We begin with the raw amino-acid sequence, 451 residues long: Adenylyltransferase and sulfurtransferase MOCS3 (451 aa).

The disordered stretch occupies residues 42 to 62 (GEDSDEAEESSNDMPTPQTKL). The span at 43 to 52 (EDSDEAEESS) shows a compositional bias: acidic residues. T60 carries the phosphothreonine modification. Residues G99, D120, 127–131 (SNLHR), K144, and 188–189 (DN) each bind ATP. Residues C229 and C232 each contribute to the Zn(2+) site. C246 acts as the Glycyl thioester intermediate; for adenylyltransferase activity in catalysis. 2 residues coordinate Zn(2+): C304 and C307. One can recognise a Rhodanese domain in the interval 353–449 (QSQPHLLLDV…WTGSVDATFP (97 aa)). The Cysteine persulfide intermediate; for sulfurtransferase activity role is filled by C408.

It in the N-terminal section; belongs to the HesA/MoeB/ThiF family. UBA4 subfamily. Requires Zn(2+) as cofactor.

It localises to the cytoplasm. The protein localises to the cytosol. The enzyme catalyses [molybdopterin-synthase sulfur-carrier protein]-C-terminal Gly-Gly + ATP + H(+) = [molybdopterin-synthase sulfur-carrier protein]-C-terminal Gly-Gly-AMP + diphosphate. It catalyses the reaction [molybdopterin-synthase sulfur-carrier protein]-C-terminal Gly-Gly-AMP + S-sulfanyl-L-cysteinyl-[cysteine desulfurase] + AH2 = [molybdopterin-synthase sulfur-carrier protein]-C-terminal-Gly-aminoethanethioate + L-cysteinyl-[cysteine desulfurase] + A + AMP + 2 H(+). The protein operates within tRNA modification; 5-methoxycarbonylmethyl-2-thiouridine-tRNA biosynthesis. It participates in cofactor biosynthesis; molybdopterin biosynthesis. Functionally, plays a central role in 2-thiolation of mcm(5)S(2)U at tRNA wobble positions of cytosolic tRNA(Lys), tRNA(Glu) and tRNA(Gln). Also essential during biosynthesis of the molybdenum cofactor. Acts by mediating the C-terminal thiocarboxylation of sulfur carriers URM1 and MOCS2A. Its N-terminus first activates URM1 and MOCS2A as acyl-adenylates (-COAMP), then the persulfide sulfur on the catalytic cysteine is transferred to URM1 and MOCS2A to form thiocarboxylation (-COSH) of their C-terminus. The reaction probably involves hydrogen sulfide that is generated from the persulfide intermediate and that acts as a nucleophile towards URM1 and MOCS2A. Subsequently, a transient disulfide bond is formed. Does not use thiosulfate as sulfur donor; NFS1 probably acting as a sulfur donor for thiocarboxylation reactions. In Drosophila persimilis (Fruit fly), this protein is Adenylyltransferase and sulfurtransferase MOCS3.